The primary structure comprises 494 residues: Glycerol kinase (494 aa).

Thr13 contributes to the ADP binding site. ATP-binding residues include Thr13, Thr14, and Ser15. Thr13 provides a ligand contact to sn-glycerol 3-phosphate. Arg17 contacts ADP. Sn-glycerol 3-phosphate is bound by residues Arg83, Glu84, Tyr135, and Asp244. Glycerol-binding residues include Arg83, Glu84, Tyr135, Asp244, and Gln245. ADP is bound by residues Thr266 and Gly309. ATP contacts are provided by Thr266, Gly309, Gln313, and Gly410. Gly410 and Asn414 together coordinate ADP.

It belongs to the FGGY kinase family.

The catalysed reaction is glycerol + ATP = sn-glycerol 3-phosphate + ADP + H(+). It participates in polyol metabolism; glycerol degradation via glycerol kinase pathway; sn-glycerol 3-phosphate from glycerol: step 1/1. Inhibited by fructose 1,6-bisphosphate (FBP). Functionally, key enzyme in the regulation of glycerol uptake and metabolism. Catalyzes the phosphorylation of glycerol to yield sn-glycerol 3-phosphate. The chain is Glycerol kinase from Shewanella sp. (strain ANA-3).